The following is a 211-amino-acid chain: Cytochrome c biogenesis ATP-binding export protein CcmA (211 aa).

The ABC transporter domain maps to Met-1–Gly-211. Gly-33–Thr-40 is a binding site for ATP.

It belongs to the ABC transporter superfamily. CcmA exporter (TC 3.A.1.107) family. As to quaternary structure, the complex is composed of two ATP-binding proteins (CcmA) and two transmembrane proteins (CcmB).

The protein localises to the cell inner membrane. It catalyses the reaction heme b(in) + ATP + H2O = heme b(out) + ADP + phosphate + H(+). Functionally, part of the ABC transporter complex CcmAB involved in the biogenesis of c-type cytochromes; once thought to export heme, this seems not to be the case, but its exact role is uncertain. Responsible for energy coupling to the transport system. This is Cytochrome c biogenesis ATP-binding export protein CcmA from Sodalis glossinidius (strain morsitans).